The chain runs to 61 residues: Large ribosomal subunit protein bL32 (61 aa).

It belongs to the bacterial ribosomal protein bL32 family.

In Phytoplasma mali (strain AT), this protein is Large ribosomal subunit protein bL32.